Consider the following 146-residue polypeptide: Large ribosomal subunit protein bL21 (146 aa).

A disordered region spans residues 115-146 (KSISLGKSAPKSSAKKETVKKETKPKSEKSTN). Over residues 128–146 (AKKETVKKETKPKSEKSTN) the composition is skewed to basic and acidic residues.

This sequence belongs to the bacterial ribosomal protein bL21 family. As to quaternary structure, part of the 50S ribosomal subunit. Contacts protein L20.

In terms of biological role, this protein binds to 23S rRNA in the presence of protein L20. This is Large ribosomal subunit protein bL21 from Prochlorococcus marinus (strain MIT 9312).